A 157-amino-acid polypeptide reads, in one-letter code: Transcription elongation factor GreA (157 aa).

It belongs to the GreA/GreB family.

Necessary for efficient RNA polymerase transcription elongation past template-encoded arresting sites. The arresting sites in DNA have the property of trapping a certain fraction of elongating RNA polymerases that pass through, resulting in locked ternary complexes. Cleavage of the nascent transcript by cleavage factors such as GreA or GreB allows the resumption of elongation from the new 3'terminus. GreA releases sequences of 2 to 3 nucleotides. The chain is Transcription elongation factor GreA from Hyphomonas neptunium (strain ATCC 15444).